A 1719-amino-acid polypeptide reads, in one-letter code: 5'-3' exoribonuclease 1 (1719 aa).

Positions 1268–1298 are enriched in basic and acidic residues; it reads HKSGFTDHSVRHQQRKHDSQRKFKEEYKSPK. Residues 1268–1317 are disordered; it reads HKSGFTDHSVRHQQRKHDSQRKFKEEYKSPKAECQSQKLSSKQTSGGSAR. Residues 1301-1314 show a composition bias toward polar residues; it reads CQSQKLSSKQTSGG. Ser-1382 carries the post-translational modification Phosphoserine. Positions 1397 to 1430 are enriched in basic and acidic residues; it reads ILKIDSPDTRDSKNDMKKSDNEATVSSRRDERGV. Disordered stretches follow at residues 1397 to 1445 and 1634 to 1719; these read ILKI…KPHG and ENKE…KPSE. Residues 1638-1660 are compositionally biased toward polar residues; sequence AQSSQATPLQTNKPGSSEATKMT. The span at 1661-1680 shows a compositional bias: low complexity; that stretch reads PQESPPASSSSSQAAQPVSS. The segment covering 1681 to 1690 has biased composition (polar residues); sequence HVETASQGHV.

It belongs to the 5'-3' exonuclease family. In terms of assembly, found in a mRNP complex with UPF1, UPF2, UPF3B and XRN1. Associates with alpha and beta tubulins. Interacts with DIS3L2. Interacts with ZC3HAV1 in an RNA-dependent manner. Interacts with ZFP36L1. Interacts with TRIM71 (via NHL repeats) in an RNA-dependent manner. Interacts with YTHDC2 (via ANK repeats). Interacts with DHX34; the interaction is RNA-independent. In terms of tissue distribution, expressed in heart, brain (spinal cord, dorsal root and superior cervical ganglia, neurons of the cerebrum and brain stem), peripheral nerve fibers in the skin and intestine, spleen, lung, liver, skeletal muscle, kidney and testis.

Its subcellular location is the cytoplasm. Its function is as follows. Major 5'-3' exoribonuclease involved in mRNA decay. Required for the 5'-3'-processing of the G4 tetraplex-containing DNA and RNA substrates. The kinetic of hydrolysis is faster for G4 RNA tetraplex than for G4 DNA tetraplex and monomeric RNA tetraplex. Binds to RNA and DNA. Plays a role in replication-dependent histone mRNA degradation. This chain is 5'-3' exoribonuclease 1, found in Mus musculus (Mouse).